Here is a 316-residue protein sequence, read N- to C-terminus: tRNA dimethylallyltransferase (316 aa).

9 to 16 (GPTASGKS) lines the ATP pocket. A substrate-binding site is contributed by 11-16 (TASGKS). Interaction with substrate tRNA regions lie at residues 34-37 (DSMQ) and 158-162 (QRLAR).

The protein belongs to the IPP transferase family. As to quaternary structure, monomer. Mg(2+) is required as a cofactor.

It catalyses the reaction adenosine(37) in tRNA + dimethylallyl diphosphate = N(6)-dimethylallyladenosine(37) in tRNA + diphosphate. In terms of biological role, catalyzes the transfer of a dimethylallyl group onto the adenine at position 37 in tRNAs that read codons beginning with uridine, leading to the formation of N6-(dimethylallyl)adenosine (i(6)A). This Hyphomonas neptunium (strain ATCC 15444) protein is tRNA dimethylallyltransferase.